A 132-amino-acid polypeptide reads, in one-letter code: Actin-related protein 2/3 complex subunit 5A (132 aa).

An N-acetylalanine modification is found at Ala2.

This sequence belongs to the ARPC5 family. In terms of assembly, component of the Arp2/3 complex composed of ARP2, ARP3, ARPC1/p41-ARC, ARPC2/p34-ARC, ARPC3/p21-ARC, ARPC4/p20-ARC and ARPC5/p16-ARC. In terms of tissue distribution, expressed at low levels in all tissues with a relatively highest expression in inflorescences.

Its subcellular location is the cytoplasm. It localises to the cytoskeleton. It is found in the cell projection. Functionally, functions as a component of the Arp2/3 complex which is involved in regulation of actin polymerization and together with an activating nucleation-promoting factor (NPF) mediates the formation of branched actin networks. Arp2/3 complex plays a critical role in the control of cell morphogenesis via the modulation of cell polarity development. This chain is Actin-related protein 2/3 complex subunit 5A (ARPC5A), found in Arabidopsis thaliana (Mouse-ear cress).